Reading from the N-terminus, the 513-residue chain is ATP synthase subunit alpha (513 aa).

Position 170–177 (170–177 (GDRQTGKT)) interacts with ATP.

This sequence belongs to the ATPase alpha/beta chains family. In terms of assembly, F-type ATPases have 2 components, CF(1) - the catalytic core - and CF(0) - the membrane proton channel. CF(1) has five subunits: alpha(3), beta(3), gamma(1), delta(1), epsilon(1). CF(0) has three main subunits: a(1), b(2) and c(9-12). The alpha and beta chains form an alternating ring which encloses part of the gamma chain. CF(1) is attached to CF(0) by a central stalk formed by the gamma and epsilon chains, while a peripheral stalk is formed by the delta and b chains.

The protein resides in the cell inner membrane. It carries out the reaction ATP + H2O + 4 H(+)(in) = ADP + phosphate + 5 H(+)(out). Functionally, produces ATP from ADP in the presence of a proton gradient across the membrane. The alpha chain is a regulatory subunit. This Teredinibacter turnerae (strain ATCC 39867 / T7901) protein is ATP synthase subunit alpha.